We begin with the raw amino-acid sequence, 237 residues long: MADS-box protein GGM13 (237 aa).

In terms of domain architecture, MADS-box spans 1 to 61 (MGRGKIEIKR…GKLFEYSSAS (61 aa)). A K-box domain is found at 84 to 174 (NQHLYCEMTR…CRLLAEQQAA (91 aa)).

As to expression, expression specific for female reproductive structures: strong at the adaxial base of the cupules, where ovules will later develop, then in the outermost cell layer of the nucellus, in the inner envelope, and in the inner half of the middle envelope at late stage of ovule development.

The protein localises to the nucleus. Probable transcription factor. The protein is MADS-box protein GGM13 (GGM13) of Gnetum gnemon (Spanish joint-fir).